The sequence spans 51 residues: Ribosome biogenesis protein Nop10 (51 aa).

It belongs to the NOP10 family.

In terms of biological role, involved in ribosome biogenesis; more specifically in 18S rRNA pseudouridylation and in cleavage of pre-rRNA. The polypeptide is Ribosome biogenesis protein Nop10 (Methanococcus maripaludis (strain C7 / ATCC BAA-1331)).